The following is a 457-amino-acid chain: Dihydrolipoyl dehydrogenase (457 aa).

Residues 32–40, Lys49, and Ala113 each bind FAD; that span reads EKEYFGGVC. A disulfide bridge links Cys40 with Cys45. Residues 178–182, Val235, and 262–265 contribute to the NAD(+) site; these read GGGVI and SIGR. Residues Asp303 and Ala311 each contribute to the FAD site. The Proton acceptor role is filled by His437.

This sequence belongs to the class-I pyridine nucleotide-disulfide oxidoreductase family. Homodimer. Requires FAD as cofactor.

It localises to the cytoplasm. It catalyses the reaction N(6)-[(R)-dihydrolipoyl]-L-lysyl-[protein] + NAD(+) = N(6)-[(R)-lipoyl]-L-lysyl-[protein] + NADH + H(+). Its function is as follows. Lipoamide dehydrogenase is a component of the alpha-ketoacid dehydrogenase complexes. The sequence is that of Dihydrolipoyl dehydrogenase (pdhD) from Mycoplasma pneumoniae (strain ATCC 29342 / M129 / Subtype 1) (Mycoplasmoides pneumoniae).